Here is a 341-residue protein sequence, read N- to C-terminus: Lipoyl synthase (341 aa).

Cys85, Cys90, Cys96, Cys111, Cys115, Cys118, and Ser325 together coordinate [4Fe-4S] cluster. In terms of domain architecture, Radical SAM core spans 97 to 314; that stretch reads FSGGTATFMI…AEEGYKMGFK (218 aa).

The protein belongs to the radical SAM superfamily. Lipoyl synthase family. The cofactor is [4Fe-4S] cluster.

The protein localises to the cytoplasm. The catalysed reaction is [[Fe-S] cluster scaffold protein carrying a second [4Fe-4S](2+) cluster] + N(6)-octanoyl-L-lysyl-[protein] + 2 oxidized [2Fe-2S]-[ferredoxin] + 2 S-adenosyl-L-methionine + 4 H(+) = [[Fe-S] cluster scaffold protein] + N(6)-[(R)-dihydrolipoyl]-L-lysyl-[protein] + 4 Fe(3+) + 2 hydrogen sulfide + 2 5'-deoxyadenosine + 2 L-methionine + 2 reduced [2Fe-2S]-[ferredoxin]. The protein operates within protein modification; protein lipoylation via endogenous pathway; protein N(6)-(lipoyl)lysine from octanoyl-[acyl-carrier-protein]: step 2/2. Catalyzes the radical-mediated insertion of two sulfur atoms into the C-6 and C-8 positions of the octanoyl moiety bound to the lipoyl domains of lipoate-dependent enzymes, thereby converting the octanoylated domains into lipoylated derivatives. The protein is Lipoyl synthase of Pseudomonas fluorescens (strain SBW25).